Reading from the N-terminus, the 823-residue chain is MKQSRRQFLKNMSAMAATFAMPNFLIAQNAFAQSAENVSEWKITGSHWGAIRAKVQNGKVVDVKPFEYDQYPTEMIKGIKDLIYSEARIRYPMVRLDWLKKRHNSNTAQRGDNRFVRVTWDEALDLFYEELERIQQNYGPWALHTGNVGWRSTGQFHSCGNHMIRAVGMHGNSVSTSGDYSTGAGQVILPYVLGSTEVYSQGTSWEIILKESENIIFWASDPVKNLQVGWNCETHEAYKYLEQLKAKVAAKDVNVICVDPVKSKTQNYLGCDFQYINPQTDVAFMLALAHTLYVENLYDKKFIEMYTVGFEKFLPYLLGESEDKVVKDAEWAAKICAIQAEDIRQFARMLAGKRTQLIFGWAIQRQQHGEQPYWMGTVLAAMLGQIGLAGGGISYAHHYSSIGIPSSGAAMPGAFPLNLDEGQKPKYDNKNYNGYSAVIPCARITDSLLQPGETIDHNGQKITYAPYKMAIFTGCNHWHRHSERNKMKQAFQRLETIVSINYSWTATCRFSDIVLPACTPFERNDIDAYGSYSNRGVIAMQKLVDPLYDSRSDFEIFKDLCRRFGKEKEYCRNMDEMEWVKHLYEACRQENQGKFDMPPFAEFWQKGYVLFPEGEPWVRHADFREDPELHALGTPSGFIEIFSNKIASYGYADCKGHPMWFEKAERSHGGPKSDKYPFWLQSAHPDKRLHSQLCESKALRETYAIQDREPLFINPEDAKRLGIVHGDLVRVYNDRGQAIVGAHVSDNFPQGVLRLQEGAWYSPLDEKVGSIDTYGDPNTMSLDIGSSSLAQAVSANTCLVNIEKFVGQAPAVTGFHGPHEVAL.

A signal peptide (tat-type signal) is located at residues 1–32 (MKQSRRQFLKNMSAMAATFAMPNFLIAQNAFA). Ser-181 provides a ligand contact to Mo-bis(molybdopterin guanine dinucleotide).

Belongs to the prokaryotic molybdopterin-containing oxidoreductase family. Requires Mo-bis(molybdopterin guanine dinucleotide) as cofactor. Predicted to be exported by the Tat system. The position of the signal peptide cleavage has not been experimentally proven.

The protein resides in the periplasm. It carries out the reaction trimethylamine + 2 Fe(III)-[cytochrome c] + H2O = trimethylamine N-oxide + 2 Fe(II)-[cytochrome c] + 3 H(+). Reduces trimethylamine-N-oxide (TMAO) into trimethylamine; an anaerobic reaction coupled to energy-yielding reactions. In Pasteurella multocida (strain Pm70), this protein is Trimethylamine-N-oxide reductase (torA).